A 349-amino-acid chain; its full sequence is MENIETILRLAEEKILLVQNLKELQEYKVEFLGKNGIVTGELKKLGSLNEQERKEFGLKINKLKDKIQNIIKAKEEILEEQELNLKLAADKIDLTIPARRYKQGSIHPITQCSEELIQVFSQFGFTIENGPNIENDFHNFTSLNFEDDHPARQMHDTFYLKGQENNKPLLLRTHTSTVQIRAMKNGKPPFRFIAPGRTYRSDSDMTHTPMFHQIEGLVIDKNINMGHLKYVITEFIKSFFENSNIELRFRPSFFPFTEPSAEVDIRMNKNDKWLEVLGCGMVHPNVLKNVGIDSSEYQGFAFGLGVERFAMLKYNIKDLRQFFEGDMRWLKHYNFGSFDIPNLAGGLTK.

A Mg(2+)-binding site is contributed by E258.

It belongs to the class-II aminoacyl-tRNA synthetase family. Phe-tRNA synthetase alpha subunit type 1 subfamily. In terms of assembly, tetramer of two alpha and two beta subunits. Mg(2+) is required as a cofactor.

Its subcellular location is the cytoplasm. It carries out the reaction tRNA(Phe) + L-phenylalanine + ATP = L-phenylalanyl-tRNA(Phe) + AMP + diphosphate + H(+). This Rickettsia felis (strain ATCC VR-1525 / URRWXCal2) (Rickettsia azadi) protein is Phenylalanine--tRNA ligase alpha subunit.